Reading from the N-terminus, the 340-residue chain is Entry-fusion complex protein OPG094 (340 aa).

Residues 1–20 form a disordered region; sequence MGGGVSVELPKRDPPPGVPT. The N-myristoyl glycine; by host moiety is linked to residue Gly-2. The Virion surface portion of the chain corresponds to 2–319; it reads GGGVSVELPK…VQHNIKHSFD (318 aa). Residues 320–340 form a helical; Signal-anchor for type II membrane protein membrane-spanning segment; sequence LKLHLISLLSLLVIWILIVAI.

Belongs to the orthopoxvirus OPG086 family. As to quaternary structure, interacts with OPG143. Component of the entry fusion complex (EFC) composed of OPG053, OPG076, OPG086, OPG094, OPG095, OPG099, OPG107, OPG143, OPG104, OPG147 and OPG155. Except for OPG095 and OPG053, each of the EFC proteins is required for assembly or stability of the complex. Post-translationally, unglycosylated because produced in viral factories instead of the classic ER -Golgi route.

It localises to the virion membrane. In terms of biological role, component of the entry fusion complex (EFC), which consists of 11 proteins. During cell infection, this complex mediates entry of the virion core into the host cytoplasm by a two-step mechanism consisting of lipid mixing of the viral and cellular membranes and subsequent pore formation. This chain is Entry-fusion complex protein OPG094 (OPG094), found in Variola virus.